The following is a 359-amino-acid chain: tRNA-specific 2-thiouridylase MnmA (359 aa).

ATP-binding positions include 7–14 and Leu33; that span reads GLSGGVDS. Cys94 serves as the catalytic Nucleophile. Cys94 and Cys193 form a disulfide bridge. Gly119 contacts ATP. The interaction with tRNA stretch occupies residues 143 to 145; it reads KDQ. The active-site Cysteine persulfide intermediate is the Cys193. An interaction with tRNA region spans residues 298 to 299; the sequence is RY.

Belongs to the MnmA/TRMU family.

The protein resides in the cytoplasm. It catalyses the reaction S-sulfanyl-L-cysteinyl-[protein] + uridine(34) in tRNA + AH2 + ATP = 2-thiouridine(34) in tRNA + L-cysteinyl-[protein] + A + AMP + diphosphate + H(+). Functionally, catalyzes the 2-thiolation of uridine at the wobble position (U34) of tRNA, leading to the formation of s(2)U34. The protein is tRNA-specific 2-thiouridylase MnmA of Trichodesmium erythraeum (strain IMS101).